The following is a 1851-amino-acid chain: Voltage-dependent calcium channel type A subunit alpha-1 (1851 aa).

The Cytoplasmic segment spans residues 1–38 (MGGPKKEENPPGGGPTSLFILTEDNPIRKYTRFIIEWP). One copy of the I repeat lies at 25–316 (NPIRKYTRFI…LVLGVLSGEF (292 aa)). A helical membrane pass occupies residues 39 to 57 (PFEYAVLLTIIANCVVLAL). Over 58–75 (EEHLPGGDKTVLAQKLEK) the chain is Extracellular. Residues 76 to 95 (TEAYFLCIFCVEASLKILAL) traverse the membrane as a helical segment. The Cytoplasmic portion of the chain corresponds to 96–107 (GLVLHKHSYLRN). A helical membrane pass occupies residues 108-128 (IWNIMDFFVVVTGFMTQYPQI). Topologically, residues 129–133 (GPEVD) are extracellular. A helical transmembrane segment spans residues 134–152 (LRTLRAIRVLRPLKLVSGI). The Cytoplasmic segment spans residues 153-171 (PSLQVVLKSIIKAMAPLLQ). Residues 172 to 191 (IGLLVLFAIVIFAIIGLEFY) form a helical membrane-spanning segment. Topologically, residues 192 to 288 (SGALHKTCYS…WTNDALGSAF (97 aa)) are extracellular. N-linked (GlcNAc...) asparagine glycosylation is found at asparagine 234 and asparagine 235. The helical transmembrane segment at 289-313 (NWIYFVPLIVIGSFFMLNLVLGVLS) threads the bilayer. The Cytoplasmic portion of the chain corresponds to 314–441 (GEFSNERNRV…FWIRHTVKTQ (128 aa)). A disordered region spans residues 381–417 (RKKLKSLGKSKSTDTEEEEAEEDYGDDGYLKTRSKPQ). A compositionally biased stretch (acidic residues) spans 395–406 (TEEEEAEEDYGD). One copy of the II repeat lies at 427-670 (EKRFRFWIRH…VFLAIAVDNL (244 aa)). The chain crosses the membrane as a helical span at residues 442–460 (WFYWFVIVLVFLNTVCVAV). Residues 461–475 (EHYGQPSFLTEFLYY) are Extracellular-facing. The helical transmembrane segment at 476 to 495 (AEFIFLGLFMSEMFIKMYAL) threads the bilayer. Residues 496–503 (GPRIYFES) are Cytoplasmic-facing. Residues 504 to 522 (SFNRFDCVVISGSIFEVIW) traverse the membrane as a helical segment. Topologically, residues 523 to 531 (SEVKGGSFG) are extracellular. A helical membrane pass occupies residues 532–550 (LSVLRALRLLRIFKVTKYW). Over 551–569 (SSLRNLVISLLNSMRSIIS) the chain is Cytoplasmic. The helical transmembrane segment at 570–589 (LLFLLFLFILIFALLGMQLF) threads the bilayer. At 590–642 (GGQFNLPGGTPETNFNTFPIALLTVFQILTGEDWNEVMYQGIISQGGAQKGMI) the chain is on the extracellular side. Residues 643-667 (YSIYFIVLVLFGNYTLLNVFLAIAV) form a helical membrane-spanning segment. Residues 668-767 (DNLANAQELT…IRRGAHWVVN (100 aa)) lie on the Cytoplasmic side of the membrane. Residues 710–741 (ENGDGAVAPSKSKGKKKEEEKKEEEEVTEGPK) are disordered. One copy of the III repeat lies at 762-1049 (AHWVVNLPYF…IITFQEQGEA (288 aa)). A helical transmembrane segment spans residues 768–786 (LPYFDFFIMVVISMSSIAL). At 787–802 (AAEDPVRENSRRNKIL) the chain is on the extracellular side. Residues 803–822 (NYFDYAFTGVFTIEMLLKIV) traverse the membrane as a helical segment. Topologically, residues 823 to 834 (DLGVILHPGSYL) are cytoplasmic. Residues 835-853 (REFWNIMDAVVVICAAVSF) traverse the membrane as a helical segment. Topologically, residues 854–866 (GFDMSGSSAGQNL) are extracellular. Residue asparagine 865 is glycosylated (N-linked (GlcNAc...) asparagine). A helical membrane pass occupies residues 867–885 (STIKSLRVLRVLRPLKTIK). Over 886–904 (RVPKLKAVFDCVVNSLKNV) the chain is Cytoplasmic. A helical membrane pass occupies residues 905-924 (VNILIVYILFQFIFSVIGVQ). Residues 925–1013 (LFNGKFFYCT…EDRGPIQNFR (89 aa)) are Extracellular-facing. A helical transmembrane segment spans residues 1014 to 1038 (IEMSIFYIVYFIVFPFFFVNIFVAL). Over 1039–1093 (IIITFQEQGEAELQDGEIDKNQKSCIDFTIGARPLERYMPKNRNTFKYKVWRIVV) the chain is Cytoplasmic. Residues 1086-1347 (YKVWRIVVST…DNFDYLTRDS (262 aa)) form an IV repeat. Residues 1094-1122 (STPFEYFIMMLIVFNTLLLMMKYHNQGDM) traverse the membrane as a helical segment. Topologically, residues 1123-1127 (YEKSL) are extracellular. Residues 1128–1147 (KYINMGFTGMFSVETVLKII) traverse the membrane as a helical segment. The Cytoplasmic portion of the chain corresponds to 1148-1155 (GFGVKNFF). The helical transmembrane segment at 1156–1174 (KDPWNIFDLITVLGSIVDA) threads the bilayer. Over 1175 to 1184 (LWMEFGHDDS) the chain is Extracellular. The chain crosses the membrane as a helical span at residues 1185–1203 (NSINVGFLRLFRAARLIKL). Topologically, residues 1204–1222 (LRQGYTIRILLWTFVQSFK) are cytoplasmic. A helical transmembrane segment spans residues 1223–1242 (ALPYVCLLIAMLFFIYAIIG). Residues 1243-1308 (MQVFGNIKLG…DAEKAPGEYC (66 aa)) are Extracellular-facing. The interval 1306-1348 (EYCGSTLAYAYFVSFIFFCSFLMLNLFVAVIMDNFDYLTRDSS) is phenylalkylamine binding. Residues 1309-1333 (GSTLAYAYFVSFIFFCSFLMLNLFV) traverse the membrane as a helical segment. The Cytoplasmic segment spans residues 1334–1851 (AVIMDNFDYL…HSDSDEEDWC (518 aa)). Residues 1353–1388 (HHLDEFVRIWAEYDPNATGKIHYTEMYDMLKNMDPP) form the EF-hand domain. Aspartate 1366, asparagine 1368, threonine 1370, lysine 1372, and glutamate 1377 together coordinate Ca(2+). Disordered regions lie at residues 1513-1572 (DASR…HHDI), 1588-1653 (TRHP…SPAR), 1685-1764 (RAGI…DRDR), and 1823-1851 (VLPS…EDWC). The span at 1589 to 1600 (RHPRHGNSHPRY) shows a compositional bias: basic residues. A compositionally biased stretch (low complexity) spans 1604–1619 (SWSASTSPARSPSPSR). Composition is skewed to polar residues over residues 1637 to 1649 (YGTT…SRSP) and 1698 to 1710 (KPST…TNIN). The span at 1734–1764 (HHRDLLRDPRDMYYSSRERERDRERLRDRDR) shows a compositional bias: basic and acidic residues.

It belongs to the calcium channel alpha-1 subunit (TC 1.A.1.11) family. As to expression, expressed widely in the embryonic nervous system.

The protein resides in the membrane. Voltage-sensitive calcium channels (VSCC) mediate the entry of calcium ions into excitable cells and are also involved in a variety of calcium-dependent processes, including muscle contraction, neurotransmitter release, gene expression, cell motility, cell division and cell death. Probably encodes a dihydropyridine-insensitive current. Vital for survival to adulthood. The chain is Voltage-dependent calcium channel type A subunit alpha-1 (cac) from Drosophila melanogaster (Fruit fly).